The primary structure comprises 198 residues: Recombination protein RecR (198 aa).

Residues 57-72 (CSICGNLTDDDPCHIC) form a C4-type zinc finger. A Toprim domain is found at 80-175 (EIILVVEDSK…KVTRLARGLA (96 aa)).

Belongs to the RecR family.

Its function is as follows. May play a role in DNA repair. It seems to be involved in an RecBC-independent recombinational process of DNA repair. It may act with RecF and RecO. This is Recombination protein RecR from Streptococcus equi subsp. equi (strain 4047).